The sequence spans 240 residues: Phosphoribosylaminoimidazole-succinocarboxamide synthase (240 aa).

Belongs to the SAICAR synthetase family.

The enzyme catalyses 5-amino-1-(5-phospho-D-ribosyl)imidazole-4-carboxylate + L-aspartate + ATP = (2S)-2-[5-amino-1-(5-phospho-beta-D-ribosyl)imidazole-4-carboxamido]succinate + ADP + phosphate + 2 H(+). Its pathway is purine metabolism; IMP biosynthesis via de novo pathway; 5-amino-1-(5-phospho-D-ribosyl)imidazole-4-carboxamide from 5-amino-1-(5-phospho-D-ribosyl)imidazole-4-carboxylate: step 1/2. The chain is Phosphoribosylaminoimidazole-succinocarboxamide synthase from Limosilactobacillus fermentum (strain NBRC 3956 / LMG 18251) (Lactobacillus fermentum).